Reading from the N-terminus, the 462-residue chain is A-type ATP synthase subunit B (462 aa).

Belongs to the ATPase alpha/beta chains family. As to quaternary structure, has multiple subunits with at least A(3), B(3), C, D, E, F, H, I and proteolipid K(x).

Its subcellular location is the cell membrane. Its function is as follows. Component of the A-type ATP synthase that produces ATP from ADP in the presence of a proton gradient across the membrane. The B chain is a regulatory subunit. The chain is A-type ATP synthase subunit B from Methanococcus maripaludis (strain C7 / ATCC BAA-1331).